A 173-amino-acid chain; its full sequence is ATP synthase subunit b (173 aa).

Residues 15 to 35 (LYVGDMLFYAILFIVLMALIA) form a helical membrane-spanning segment.

The protein belongs to the ATPase B chain family. As to quaternary structure, F-type ATPases have 2 components, F(1) - the catalytic core - and F(0) - the membrane proton channel. F(1) has five subunits: alpha(3), beta(3), gamma(1), delta(1), epsilon(1). F(0) has three main subunits: a(1), b(2) and c(10-14). The alpha and beta chains form an alternating ring which encloses part of the gamma chain. F(1) is attached to F(0) by a central stalk formed by the gamma and epsilon chains, while a peripheral stalk is formed by the delta and b chains.

It localises to the cell membrane. F(1)F(0) ATP synthase produces ATP from ADP in the presence of a proton or sodium gradient. F-type ATPases consist of two structural domains, F(1) containing the extramembraneous catalytic core and F(0) containing the membrane proton channel, linked together by a central stalk and a peripheral stalk. During catalysis, ATP synthesis in the catalytic domain of F(1) is coupled via a rotary mechanism of the central stalk subunits to proton translocation. Functionally, component of the F(0) channel, it forms part of the peripheral stalk, linking F(1) to F(0). This chain is ATP synthase subunit b, found in Pediococcus pentosaceus (strain ATCC 25745 / CCUG 21536 / LMG 10740 / 183-1w).